Here is a 261-residue protein sequence, read N- to C-terminus: Probable pectin methylesterase CGR2 (261 aa).

Over 1–35 (MARRQVGSTRRVGDGGSFPFAGALHSKSRSSPLLS) the chain is Cytoplasmic. The helical transmembrane segment at 36 to 56 (ICLVLVGACLLIGYAYSGPGI) threads the bilayer. The Lumenal segment spans residues 57 to 261 (FKSIKEVSKV…CQVFHLKPLH (205 aa)). N-linked (GlcNAc...) asparagine glycosylation occurs at asparagine 174.

This sequence belongs to the class I-like SAM-binding methyltransferase superfamily.

The protein resides in the golgi apparatus membrane. Its function is as follows. Together with CGR3, required for homogalacturonan pectins (HG) methylesterification in the Golgi apparatus prior to integration into cell walls, essential for general growth and development. Promotes rosette growth. Impacts carbon (C) partitioning, photosynthesis and respiration efficiency by influencing leaf mesophyll cell walls morphology and physiology; pectin methylesterification modulates both expansion and positioning of cells in leaves, probably by changing cell walls plasticity. This Arabidopsis thaliana (Mouse-ear cress) protein is Probable pectin methylesterase CGR2.